Here is a 415-residue protein sequence, read N- to C-terminus: Membrane-bound ghrelin O-acyltransferase mboat4 (415 aa).

The Lumenal portion of the chain corresponds to Met1 to Trp6. The chain crosses the membrane as a helical span at residues Ile7–Phe28. Residues His29–Arg42 lie on the Cytoplasmic side of the membrane. Residues Tyr43–Met58 traverse the membrane as a helical segment. Residues Gly59–Tyr61 are Lumenal-facing. The helical transmembrane segment at Ser62–Tyr78 threads the bilayer. The Cytoplasmic segment spans residues Ile79–Leu84. A helical membrane pass occupies residues His85–Val103. Residues Gln104–Ile122 lie on the Lumenal side of the membrane. A helical membrane pass occupies residues Ser123–Asp138. At Phe139–Thr193 the chain is on the cytoplasmic side. Residues Ser194–Lys214 form a helical membrane-spanning segment. Over Ser215–Val227 the chain is Lumenal. The chain crosses the membrane as a helical span at residues Leu228–Met247. Residues Ser248 to Arg312 are Cytoplasmic-facing. Active-site residues include Asn295 and His326. Residues Ser313–His326 traverse the membrane as a helical segment. Residues Gly327–Leu328 are Lumenal-facing. Residues His329–Ala345 form a helical membrane-spanning segment. The Cytoplasmic segment spans residues Asp346–Arg364. Residues Leu365–Val385 traverse the membrane as a helical segment. Topologically, residues Glu386–Lys394 are lumenal. Residues Leu395–Leu415 traverse the membrane as a helical segment.

The protein belongs to the membrane-bound acyltransferase family. In terms of assembly, monomer. In terms of processing, not glycosylated.

It is found in the endoplasmic reticulum membrane. The enzyme catalyses octanoyl-CoA + L-seryl-[protein] = O-octanoyl-L-seryl-[protein] + CoA. The catalysed reaction is decanoyl-CoA + L-seryl-[protein] = O-decanoyl-L-seryl-[protein] + CoA. It carries out the reaction L-seryl-[protein] + acetyl-CoA = O-acetyl-L-seryl-[protein] + CoA. It catalyses the reaction L-seryl-[protein] + butanoyl-CoA = O-butanoyl-L-seryl-[protein] + CoA. The enzyme catalyses pentanoyl-CoA + L-seryl-[protein] = O-pentanoyl-L-seryl-[protein] + CoA. The catalysed reaction is hexanoyl-CoA + L-seryl-[protein] = O-hexanoyl-L-seryl-[protein] + CoA. It carries out the reaction heptanoyl-CoA + L-seryl-[protein] = O-heptanoyl-L-seryl-[protein] + CoA. It catalyses the reaction nonanoyl-CoA + L-seryl-[protein] = O-nonanoyl-L-seryl-[protein] + CoA. The enzyme catalyses L-seryl-[protein] + dodecanoyl-CoA = O-dodecanoyl-L-seryl-[protein] + CoA. The catalysed reaction is L-seryl-[protein] + tetradecanoyl-CoA = O-tetradecanoyl-L-seryl-[protein] + CoA. It carries out the reaction a fatty acyl-CoA + L-seryl-[protein] = O-fatty acyl-L-seryl-[protein] + CoA. Functionally, catalyzes ghrelin acylation at 'Ser-3' using preferentially octanoyl-CoA, hexanoyl-CoA and decanoyl-CoA as acyl-CoA donors leading to ghrelin activity. In vitro uses also acyl-CoA donors of different lengths from short-chain (C2) to long-chain fatty acids (C16) knowing that acyl-CoA donors from butanoyl-CoA (C4) to dodecanoyl-CoA (C12) are more efficient compared to longer acyl-CoA donors, such as myristoyl-CoA (C14) and palmitoyl-CoA (C16) that are not efficient. The sequence is that of Membrane-bound ghrelin O-acyltransferase mboat4 from Danio rerio (Zebrafish).